The chain runs to 798 residues: Protocadherin beta-2 (798 aa).

The signal sequence occupies residues 1–30; sequence MEAGEGKERVPKQRQVLIFFVLLGIAQASC. Residues 31-692 lie on the Extracellular side of the membrane; it reads QPRHYSVAEE…AQADLLTVYL (662 aa). Cadherin domains follow at residues 37–135, 136–244, 249–349, 354–453, and 458–563; these read VAEE…SPVF, LDKE…VPEF, YEVQ…PPEL, LINQ…APAF, and YTLF…SPFV. Asn171 carries an N-linked (GlcNAc...) asparagine glycan. At Lys299 the chain carries N6-acetyllysine. 2 N-linked (GlcNAc...) asparagine glycosylation sites follow: Asn420 and Asn438. The N-linked (GlcNAc...) asparagine glycan is linked to Asn569. Positions 570-673 constitute a Cadherin 6 domain; that stretch reads GSAPCTELVP…LVDGFSQPYL (104 aa). Residues 693–713 traverse the membrane as a helical segment; sequence VVALASVSSLFLFSVLLFVAV. Residues 714–798 lie on the Cytoplasmic side of the membrane; the sequence is RLCRRSRAAS…PSFRKSFEFT (85 aa).

It localises to the cell membrane. Functionally, potential calcium-dependent cell-adhesion protein. May be involved in the establishment and maintenance of specific neuronal connections in the brain. In Homo sapiens (Human), this protein is Protocadherin beta-2 (PCDHB2).